The sequence spans 63 residues: Small ribosomal subunit protein eS27 (63 aa).

Residues C18, C21, C37, and C40 each contribute to the Zn(2+) site. Residues 18 to 40 (CLDCGNQQVVFDRAASYVQCIIC) form a C4-type zinc finger.

It belongs to the eukaryotic ribosomal protein eS27 family. In terms of assembly, part of the 30S ribosomal subunit. Zn(2+) serves as cofactor.

The sequence is that of Small ribosomal subunit protein eS27 from Methanothermobacter thermautotrophicus (strain ATCC 29096 / DSM 1053 / JCM 10044 / NBRC 100330 / Delta H) (Methanobacterium thermoautotrophicum).